A 727-amino-acid chain; its full sequence is Anaphase-promoting complex subunit 5 (727 aa).

Serine 180 bears the Phosphoserine mark. TPR repeat units lie at residues 194-234 (QKQA…FNPD), 235-285 (FAEA…GRSL), 286-322 (RYAA…SNDH), 323-359 (VCLQ…FGLP), 360-390 (RAFA…SELI), 391-438 (DISI…TESF), 439-472 (AVAL…FPPN), 473-512 (SQHA…ALNG), 513-552 (IEGV…TEMV), 553-592 (ISVL…QYLA), 593-632 (SETV…ILDK), 633-668 (GRAM…NLTE), and 669-708 (AKNY…CAMV). Threonine 217 carries the phosphothreonine modification.

This sequence belongs to the APC5 family. The mammalian APC/C is composed at least of 14 distinct subunits ANAPC1, ANAPC2, CDC27/APC3, ANAPC4, ANAPC5, CDC16/APC6, ANAPC7, CDC23/APC8, ANAPC10, ANAPC11, CDC26/APC12, ANAPC13, ANAPC15 and ANAPC16 that assemble into a complex of at least 19 chains with a combined molecular mass of around 1.2 MDa; APC/C interacts with FZR1 and FBXO5.

The protein localises to the nucleus. Its subcellular location is the cytoplasm. The protein resides in the cytoskeleton. It is found in the spindle. It participates in protein modification; protein ubiquitination. Component of the anaphase promoting complex/cyclosome (APC/C), a cell cycle-regulated E3 ubiquitin ligase that controls progression through mitosis and the G1 phase of the cell cycle. The APC/C complex acts by mediating ubiquitination and subsequent degradation of target proteins: it mainly mediates the formation of 'Lys-11'-linked polyubiquitin chains and, to a lower extent, the formation of 'Lys-48'- and 'Lys-63'-linked polyubiquitin chains. The APC/C complex catalyzes assembly of branched 'Lys-11'-/'Lys-48'-linked branched ubiquitin chains on target proteins. The protein is Anaphase-promoting complex subunit 5 (Anapc5) of Rattus norvegicus (Rat).